A 328-amino-acid polypeptide reads, in one-letter code: D-cysteine desulfhydrase (328 aa).

Position 51 is an N6-(pyridoxal phosphate)lysine (lysine 51).

This sequence belongs to the ACC deaminase/D-cysteine desulfhydrase family. Homodimer. Pyridoxal 5'-phosphate serves as cofactor.

It catalyses the reaction D-cysteine + H2O = hydrogen sulfide + pyruvate + NH4(+) + H(+). Catalyzes the alpha,beta-elimination reaction of D-cysteine and of several D-cysteine derivatives. It could be a defense mechanism against D-cysteine. The protein is D-cysteine desulfhydrase of Escherichia fergusonii (strain ATCC 35469 / DSM 13698 / CCUG 18766 / IAM 14443 / JCM 21226 / LMG 7866 / NBRC 102419 / NCTC 12128 / CDC 0568-73).